Consider the following 99-residue polypeptide: Beta-2-microglobulin (99 aa).

In terms of domain architecture, Ig-like C1-type spans 5-92 (PNVQVYSRHP…KHVTLKEPMT (88 aa)). An intrachain disulfide couples cysteine 25 to cysteine 80.

Belongs to the beta-2-microglobulin family. As to quaternary structure, heterodimer of an alpha chain and a beta chain. Beta-2-microglobulin is the beta-chain of major histocompatibility complex class I molecules.

Its subcellular location is the secreted. Functionally, component of the class I major histocompatibility complex (MHC). Involved in the presentation of peptide antigens to the immune system. In Oryctolagus cuniculus (Rabbit), this protein is Beta-2-microglobulin (B2M).